The chain runs to 147 residues: uncharacterized protein (147 aa).

Residues 13-35 form a helical membrane-spanning segment; the sequence is NSRINLLGILVLNVVCGKSSIFF.

Its subcellular location is the membrane. This is an uncharacterized protein from Saccharomyces cerevisiae (strain ATCC 204508 / S288c) (Baker's yeast).